Here is a 471-residue protein sequence, read N- to C-terminus: Cysteine--tRNA ligase (471 aa).

Zn(2+) is bound at residue Cys-29. A 'HIGH' region motif is present at residues 31-41 (PTVYDYFHIGN). Zn(2+) is bound by residues Cys-212, His-237, and Glu-241. A 'KMSKS' region motif is present at residues 269–273 (KMSKS). Residue Lys-272 participates in ATP binding.

Belongs to the class-I aminoacyl-tRNA synthetase family. Monomer. Zn(2+) serves as cofactor.

The protein resides in the cytoplasm. The enzyme catalyses tRNA(Cys) + L-cysteine + ATP = L-cysteinyl-tRNA(Cys) + AMP + diphosphate. In Symbiobacterium thermophilum (strain DSM 24528 / JCM 14929 / IAM 14863 / T), this protein is Cysteine--tRNA ligase.